We begin with the raw amino-acid sequence, 252 residues long: Type III pantothenate kinase (252 aa).

Position 6–13 (6–13 (DVGNTHTT)) interacts with ATP. 104-107 (GADR) is a binding site for substrate. The Proton acceptor role is filled by Asp106. Position 126 (Asp126) interacts with K(+). Thr129 contacts ATP. A substrate-binding site is contributed by Thr180.

The protein belongs to the type III pantothenate kinase family. As to quaternary structure, homodimer. It depends on NH4(+) as a cofactor. The cofactor is K(+).

Its subcellular location is the cytoplasm. The enzyme catalyses (R)-pantothenate + ATP = (R)-4'-phosphopantothenate + ADP + H(+). Its pathway is cofactor biosynthesis; coenzyme A biosynthesis; CoA from (R)-pantothenate: step 1/5. Catalyzes the phosphorylation of pantothenate (Pan), the first step in CoA biosynthesis. The chain is Type III pantothenate kinase from Fervidobacterium nodosum (strain ATCC 35602 / DSM 5306 / Rt17-B1).